Here is a 586-residue protein sequence, read N- to C-terminus: CTP synthase (586 aa).

The amidoligase domain stretch occupies residues 1–278 (MRKHPQTATK…DAFVVRRLNL (278 aa)). Position 20 (Ser-20) interacts with CTP. Ser-20 contacts UTP. Residues 21–26 (SLGKGL) and Asp-78 contribute to the ATP site. Residues Asp-78 and Glu-152 each contribute to the Mg(2+) site. CTP is bound by residues 159–161 (DIE), 199–204 (KTKPTQ), and Lys-235. UTP is bound by residues 199–204 (KTKPTQ) and Lys-235. The Glutamine amidotransferase type-1 domain maps to 303–551 (RIALVGKYVE…VGAAIDYKAG (249 aa)). Gly-366 is an L-glutamine binding site. Cys-393 functions as the Nucleophile; for glutamine hydrolysis in the catalytic mechanism. Residues 394–397 (LGLQ), Glu-416, and Arg-477 each bind L-glutamine. Residues His-524 and Glu-526 contribute to the active site. The disordered stretch occupies residues 560–586 (EIPEHTPNGSSHRDGVGQPLPEPASRG).

This sequence belongs to the CTP synthase family. As to quaternary structure, homotetramer.

The catalysed reaction is UTP + L-glutamine + ATP + H2O = CTP + L-glutamate + ADP + phosphate + 2 H(+). It catalyses the reaction L-glutamine + H2O = L-glutamate + NH4(+). The enzyme catalyses UTP + NH4(+) + ATP = CTP + ADP + phosphate + 2 H(+). It participates in pyrimidine metabolism; CTP biosynthesis via de novo pathway; CTP from UDP: step 2/2. Allosterically activated by GTP, when glutamine is the substrate; GTP has no effect on the reaction when ammonia is the substrate. The allosteric effector GTP functions by stabilizing the protein conformation that binds the tetrahedral intermediate(s) formed during glutamine hydrolysis. Inhibited by the product CTP, via allosteric rather than competitive inhibition. In terms of biological role, catalyzes the ATP-dependent amination of UTP to CTP with either L-glutamine or ammonia as the source of nitrogen. Regulates intracellular CTP levels through interactions with the four ribonucleotide triphosphates. This chain is CTP synthase, found in Mycobacterium tuberculosis (strain CDC 1551 / Oshkosh).